The sequence spans 357 residues: Homoserine kinase (357 aa).

This sequence belongs to the GHMP kinase family. Homoserine kinase subfamily.

It catalyses the reaction L-homoserine + ATP = O-phospho-L-homoserine + ADP + H(+). It participates in amino-acid biosynthesis; L-threonine biosynthesis; L-threonine from L-aspartate: step 4/5. Commits homoserine to the threonine biosynthesis pathway by catalyzing its O-phosphorylation. This chain is Homoserine kinase, found in Cryptococcus neoformans var. grubii serotype A (strain H99 / ATCC 208821 / CBS 10515 / FGSC 9487) (Filobasidiella neoformans var. grubii).